The primary structure comprises 208 residues: Uracil phosphoribosyltransferase (208 aa).

5-phospho-alpha-D-ribose 1-diphosphate is bound by residues R78, R103, and D130 to S138. Residues I193 and G198 to A200 contribute to the uracil site. D199 contacts 5-phospho-alpha-D-ribose 1-diphosphate.

This sequence belongs to the UPRTase family. Requires Mg(2+) as cofactor.

It carries out the reaction UMP + diphosphate = 5-phospho-alpha-D-ribose 1-diphosphate + uracil. It functions in the pathway pyrimidine metabolism; UMP biosynthesis via salvage pathway; UMP from uracil: step 1/1. With respect to regulation, allosterically activated by GTP. In terms of biological role, catalyzes the conversion of uracil and 5-phospho-alpha-D-ribose 1-diphosphate (PRPP) to UMP and diphosphate. The chain is Uracil phosphoribosyltransferase from Roseiflexus castenholzii (strain DSM 13941 / HLO8).